The sequence spans 142 residues: Hemoglobin subunit beta-1 (142 aa).

The region spanning 2 to 142 (SLTDEEIRLI…VTEALSCQYH (141 aa)) is the Globin domain. 2 residues coordinate heme b: H59 and H88.

It belongs to the globin family. In terms of assembly, heterotetramer of two alpha chains and two beta chains. In terms of tissue distribution, red blood cells.

Functionally, involved in oxygen transport from the lung to the various peripheral tissues. This is Hemoglobin subunit beta-1 (HBB1) from Torpedo marmorata (Marbled electric ray).